The following is a 465-amino-acid chain: Cysteine--tRNA ligase (465 aa).

Position 29 (Cys-29) interacts with Zn(2+). A 'HIGH' region motif is present at residues 31–41 (PTVYNYIHIGN). Zn(2+)-binding residues include Cys-209, His-234, and Glu-238. The 'KMSKS' region motif lies at 266–270 (KMSKS). Residue Lys-269 participates in ATP binding. Ser-270 carries the post-translational modification Phosphoserine.

It belongs to the class-I aminoacyl-tRNA synthetase family. Monomer. The cofactor is Zn(2+).

It is found in the cytoplasm. The catalysed reaction is tRNA(Cys) + L-cysteine + ATP = L-cysteinyl-tRNA(Cys) + AMP + diphosphate. This Bacillus cytotoxicus (strain DSM 22905 / CIP 110041 / 391-98 / NVH 391-98) protein is Cysteine--tRNA ligase.